A 1348-amino-acid polypeptide reads, in one-letter code: Kinesin-like protein KIF7 (1348 aa).

In terms of domain architecture, Kinesin motor spans 15 to 349 (PVRVALRVRP…LNYASRAQNI (335 aa)). Residue 94–101 (GQTGSGKT) coordinates ATP. The tract at residues 358 to 479 (HPEAERVPEE…EDQAAQGTSG (122 aa)) is interaction with DLG5. The tract at residues 358-1211 (HPEAERVPEE…LGRHMWINQE (854 aa)) is interaction with SMO. Disordered stretches follow at residues 451 to 486 (RSTL…DEGT) and 607 to 674 (AQAD…VCPE). Residues 480–542 (RKGDEGTQQL…ELRLRLELAQ (63 aa)) are a coiled coil. Over residues 620 to 636 (SEEEGEEEEEEEEEEEE) the composition is skewed to acidic residues. Coiled-coil stretches lie at residues 698–1057 (APAA…IEAL) and 1109–1211 (FDKV…INQE). Position 903 is a phosphoserine (serine 903). Disordered regions lie at residues 1288-1314 (LCSE…VLPM) and 1328-1348 (KPRW…KNPL).

It belongs to the TRAFAC class myosin-kinesin ATPase superfamily. Kinesin family. Can form homodimers and interacts with microtubules. Interacts with GLI1 and SMO. Interacts with GLI2, GLI3 and SUFU. Interacts with NPHP1. Interacts with SMO and DLG5 (via PDZ4 or guanylate kinase-like domain). In terms of processing, polyubiquitinated by UBR3. As to expression, expressed in heart, lung, liver, kidney, testis, spleen and cerebellum.

The protein resides in the cell projection. The protein localises to the cilium. Its subcellular location is the cytoplasm. It localises to the cytoskeleton. It is found in the cilium basal body. Essential for hedgehog signaling regulation: acts both as a negative and a positive regulator of sonic hedgehog (Shh) and Indian hedgehog (Ihh) pathways, acting downstream of SMO, through both SUFU-dependent and -independent mechanisms. Involved in the regulation of microtubular dynamics. Required for proper organization of the ciliary tip and control of ciliary localization of SUFU-GLI2 complexes. Required for localization of GLI3 to cilia in response to Shh. Negatively regulates Shh signaling by preventing inappropriate activation of the transcriptional activator GLI2 in the absence of ligand. Positively regulates Shh signaling by preventing the processing of the transcription factor GLI3 into its repressor form. In keratinocytes, promotes the dissociation of SUFU-GLI2 complexes, GLI2 nuclear translocation and Shh signaling activation. Involved in the regulation of epidermal differentiation and chondrocyte development. This Mus musculus (Mouse) protein is Kinesin-like protein KIF7 (Kif7).